The chain runs to 201 residues: Recombination protein RecR (201 aa).

The C4-type zinc-finger motif lies at 60-75 (CHACGNVDTSDPCTIC). Residues 83-178 (TTLVVVEDVS…TITRLAHGVP (96 aa)) enclose the Toprim domain.

The protein belongs to the RecR family.

May play a role in DNA repair. It seems to be involved in an RecBC-independent recombinational process of DNA repair. It may act with RecF and RecO. The protein is Recombination protein RecR of Methylorubrum populi (strain ATCC BAA-705 / NCIMB 13946 / BJ001) (Methylobacterium populi).